We begin with the raw amino-acid sequence, 274 residues long: 2,3,4,5-tetrahydropyridine-2,6-dicarboxylate N-succinyltransferase (274 aa).

2 residues coordinate substrate: arginine 104 and aspartate 141.

Belongs to the transferase hexapeptide repeat family. In terms of assembly, homotrimer.

It is found in the cytoplasm. It carries out the reaction (S)-2,3,4,5-tetrahydrodipicolinate + succinyl-CoA + H2O = (S)-2-succinylamino-6-oxoheptanedioate + CoA. Its pathway is amino-acid biosynthesis; L-lysine biosynthesis via DAP pathway; LL-2,6-diaminopimelate from (S)-tetrahydrodipicolinate (succinylase route): step 1/3. This Escherichia coli O139:H28 (strain E24377A / ETEC) protein is 2,3,4,5-tetrahydropyridine-2,6-dicarboxylate N-succinyltransferase.